A 175-amino-acid chain; its full sequence is Crossover junction endodeoxyribonuclease RuvC (175 aa).

Active-site residues include D16, E76, and D148. The Mg(2+) site is built by D16, E76, and D148.

Belongs to the RuvC family. Homodimer which binds Holliday junction (HJ) DNA. The HJ becomes 2-fold symmetrical on binding to RuvC with unstacked arms; it has a different conformation from HJ DNA in complex with RuvA. In the full resolvosome a probable DNA-RuvA(4)-RuvB(12)-RuvC(2) complex forms which resolves the HJ. It depends on Mg(2+) as a cofactor.

It localises to the cytoplasm. It carries out the reaction Endonucleolytic cleavage at a junction such as a reciprocal single-stranded crossover between two homologous DNA duplexes (Holliday junction).. The RuvA-RuvB-RuvC complex processes Holliday junction (HJ) DNA during genetic recombination and DNA repair. Endonuclease that resolves HJ intermediates. Cleaves cruciform DNA by making single-stranded nicks across the HJ at symmetrical positions within the homologous arms, yielding a 5'-phosphate and a 3'-hydroxyl group; requires a central core of homology in the junction. The consensus cleavage sequence is 5'-(A/T)TT(C/G)-3'. Cleavage occurs on the 3'-side of the TT dinucleotide at the point of strand exchange. HJ branch migration catalyzed by RuvA-RuvB allows RuvC to scan DNA until it finds its consensus sequence, where it cleaves and resolves the cruciform DNA. In Bradyrhizobium diazoefficiens (strain JCM 10833 / BCRC 13528 / IAM 13628 / NBRC 14792 / USDA 110), this protein is Crossover junction endodeoxyribonuclease RuvC.